We begin with the raw amino-acid sequence, 82 residues long: UPF0291 protein LJ_1507 (82 aa).

A disordered region spans residues 61–82 (DGKEVTSEKAKEAQRRKGLRKD).

Belongs to the UPF0291 family.

The protein localises to the cytoplasm. The polypeptide is UPF0291 protein LJ_1507 (Lactobacillus johnsonii (strain CNCM I-12250 / La1 / NCC 533)).